Here is a 601-residue protein sequence, read N- to C-terminus: Glutathione-regulated potassium-efflux system protein KefB (601 aa).

13 consecutive transmembrane segments (helical) span residues 4–24 (SDFL…VPLA), 29–49 (IGAV…GLGF), 55–75 (EILH…GLEL), 87–107 (IFGV…GLLM), 115–135 (AAVV…LQLM), 152–172 (VLLF…LLAG), 177–197 (HFDW…LIGG), 207–227 (FIAA…LVLG), 230–250 (LFMD…GVLL), 268–288 (GLLL…GVLY), 291–311 (LLWV…VLYL), 324–344 (MQFA…FSTA), and 356–376 (ALLL…MKLV). One can recognise an RCK N-terminal domain in the interval 400–519 (KPQVIVVGFG…AGVTQFSRET (120 aa)).

Belongs to the monovalent cation:proton antiporter 2 (CPA2) transporter (TC 2.A.37) family. KefB subfamily. As to quaternary structure, interacts with the regulatory subunit KefG.

Its subcellular location is the cell inner membrane. Functionally, pore-forming subunit of a potassium efflux system that confers protection against electrophiles. Catalyzes K(+)/H(+) antiport. The protein is Glutathione-regulated potassium-efflux system protein KefB of Escherichia coli O17:K52:H18 (strain UMN026 / ExPEC).